The following is a 577-amino-acid chain: Acyl-coenzyme A synthetase ACSM2B, mitochondrial (577 aa).

A mitochondrion-targeting transit peptide spans 1–46 (MHWLRKVQGLCTLWGTQMSSRTLYINSRQLVSLQWGHQEVPAKFNF). Gln139 is a binding site for CoA. ATP-binding positions include 221–229 (TSGTSGLPK), 359–364 (EFYGQT), Asp446, and Arg461. Thr364 provides a ligand contact to substrate. Residue 469–471 (SGY) coordinates CoA. Residue Arg472 participates in substrate binding. Arg501 lines the CoA pocket. Position 513 is a phosphoserine (Ser513). CoA-binding positions include Lys532 and 540–542 (YPR). Lys557 lines the ATP pocket.

Belongs to the ATP-dependent AMP-binding enzyme family. Monomer. It depends on Mg(2+) as a cofactor. Mn(2+) serves as cofactor. As to expression, detected in liver.

Its subcellular location is the mitochondrion. The catalysed reaction is a medium-chain fatty acid + ATP + CoA = a medium-chain fatty acyl-CoA + AMP + diphosphate. It carries out the reaction benzoate + ATP + CoA = benzoyl-CoA + AMP + diphosphate. The enzyme catalyses hexanoate + ATP + CoA = hexanoyl-CoA + AMP + diphosphate. It catalyses the reaction butanoate + ATP + CoA = butanoyl-CoA + AMP + diphosphate. The catalysed reaction is octanoate + ATP + CoA = octanoyl-CoA + AMP + diphosphate. It carries out the reaction decanoate + ATP + CoA = decanoyl-CoA + AMP + diphosphate. Its activity is regulated as follows. Activated by monovalent cations, such as potassium, rubidium or ammonium. Its function is as follows. Catalyzes the activation of fatty acids by CoA to produce an acyl-CoA, the first step in fatty acid metabolism. Capable of activating medium-chain fatty acids (e.g. butyric (C4) to decanoic (C10) acids), and certain carboxylate-containing xenobiotics, e.g. benzoate. This Homo sapiens (Human) protein is Acyl-coenzyme A synthetase ACSM2B, mitochondrial (ACSM2B).